We begin with the raw amino-acid sequence, 117 residues long: Ig heavy chain V region 5-76 (117 aa).

Residues 1-19 (MNFVLSLIFLALILKGVQC) form the signal peptide. A framework-1 region spans residues 20–49 (EVHLVESGGGLVKPGGSLKLSCVVSGFTFN). C41 and C115 are joined by a disulfide. The segment at 50 to 54 (KYAMS) is complementarity-determining-1. Residues 55–68 (WVRQTPEKRLEWVA) are framework-2. Positions 69–85 (TISSGGLYTYYPDSVKG) are complementarity-determining-2. Residues 86–117 (RFTISRDNAGNTLYLQMSSLRSEDTAMYYCAR) form a framework-3 region.

This chain is Ig heavy chain V region 5-76, found in Mus musculus (Mouse).